Reading from the N-terminus, the 706-residue chain is Polyribonucleotide nucleotidyltransferase (706 aa).

2 residues coordinate Mg(2+): D487 and D493. The region spanning 553–612 (PRLFTMKINQDKIREVIGKGGETIRAITAETGTEINIAEDGTITIAATTQEAGDAAKKRI) is the KH domain. Positions 622–692 (GKVYEGTVVK…DRGRVRLSIK (71 aa)) constitute an S1 motif domain.

Belongs to the polyribonucleotide nucleotidyltransferase family. Mg(2+) is required as a cofactor.

The protein localises to the cytoplasm. It carries out the reaction RNA(n+1) + phosphate = RNA(n) + a ribonucleoside 5'-diphosphate. Its function is as follows. Involved in mRNA degradation. Catalyzes the phosphorolysis of single-stranded polyribonucleotides processively in the 3'- to 5'-direction. The polypeptide is Polyribonucleotide nucleotidyltransferase (Neisseria meningitidis serogroup A / serotype 4A (strain DSM 15465 / Z2491)).